Consider the following 136-residue polypeptide: Protein NrdI (136 aa).

Belongs to the NrdI family.

Probably involved in ribonucleotide reductase function. The sequence is that of Protein NrdI from Salmonella agona (strain SL483).